The primary structure comprises 504 residues: Potassium voltage-gated channel subfamily V member 1 (504 aa).

Disordered regions lie at residues 1 to 22 (MDLSPRNRPLLESSSLDSGGSL) and 172 to 193 (KKDTDDQESQHESEQDFSQGPC). At 1–214 (MDLSPRNRPL…EKPGSSTAAR (214 aa)) the chain is on the cytoplasmic side. Over residues 10–22 (LLESSSLDSGGSL) the composition is skewed to low complexity. Over residues 172–185 (KKDTDDQESQHESE) the composition is skewed to basic and acidic residues. A helical transmembrane segment spans residues 215 to 235 (IFGVISIIFVAVSIVNMALMS). Topologically, residues 236–242 (AELSWLN) are extracellular. A helical transmembrane segment spans residues 243-263 (LQLLEILEYVCISWFTGEFIL). The Cytoplasmic portion of the chain corresponds to 264-280 (RFLCVKDRCRFLRKVPN). A helical membrane pass occupies residues 281-301 (IIDLLAILPFYITLLVESLSG). Residues 302-313 (SHTTQELENVGR) are Extracellular-facing. A helical; Voltage-sensor transmembrane segment spans residues 314-335 (LVQVLRLLRALRMLKLGRHSTG). Over 336–349 (LRSLGMTITQCYEE) the chain is Cytoplasmic. A helical membrane pass occupies residues 350–370 (VGLLLLFLSVGISIFSTIEYF). The short motif at 396–401 (TVGYGD) is the Selectivity filter element. Residues 411-431 (IVAFMCILSGILVLALPIAII) form a helical membrane-spanning segment. Over 432-504 (NDRFSACYFT…RSSGGDDFWF (73 aa)) the chain is Cytoplasmic.

The protein belongs to the potassium channel family. V (TC 1.A.1.2) subfamily. Kv8.1/KCNV1 sub-subfamily. Heteromultimer with KCNB1 and KCNB2. Interacts with KCNC4 and KCND1. Detected in brain, throughout layers II, IV and VI of the brain cortex. Detected in cerebellum and hippocampus, in the granule cell layer, Purkinje cell layer, pyramidal cell layer and dentate gyrus. Detected at lower levels in olfactory bulb, amygdala, thalamus, hypothalamus, midbrain and brainstem.

Its subcellular location is the cell membrane. Functionally, potassium channel subunit that does not form functional channels by itself. Modulates KCNB1 and KCNB2 channel activity by shifting the threshold for inactivation to more negative values and by slowing the rate of inactivation. Can down-regulate the channel activity of KCNB1, KCNB2, KCNC4 and KCND1, possibly by trapping them in intracellular membranes. The chain is Potassium voltage-gated channel subfamily V member 1 (KCNV1) from Mesocricetus auratus (Golden hamster).